The sequence spans 171 residues: UPF0398 protein stu0232 (171 aa).

This sequence belongs to the UPF0398 family.

This chain is UPF0398 protein stu0232, found in Streptococcus thermophilus (strain ATCC BAA-250 / LMG 18311).